Consider the following 204-residue polypeptide: Tetraspanin-13 (204 aa).

At 1 to 19 the chain is on the cytoplasmic side; it reads MVCGGFACSKNCLCALNLL. A helical membrane pass occupies residues 20–40; the sequence is YTLVSLLLIGIAAWGIGFGLI. At 41–44 the chain is on the extracellular side; that stretch reads SSLR. A helical transmembrane segment spans residues 45 to 65; the sequence is VVGVVIAVGIFLFLIALVGLI. The Cytoplasmic segment spans residues 66–72; it reads GAVKHHQ. The helical transmembrane segment at 73–93 threads the bilayer; the sequence is VLLFFYMIILLLVFIVQFSVS. The Extracellular portion of the chain corresponds to 94-167; that stretch reads CACLALNQEQ…IGRYAGEVLR (74 aa). N-linked (GlcNAc...) asparagine glycosylation is found at N113 and N137. A Phosphoserine modification is found at S143. Residues 168-188 traverse the membrane as a helical segment; the sequence is FVGGIGLFFSFTEILGVWLTY. Topologically, residues 189–204 are cytoplasmic; the sequence is RYRNQKDPRANPSAFL.

It belongs to the tetraspanin (TM4SF) family.

It is found in the membrane. In Bos taurus (Bovine), this protein is Tetraspanin-13 (TSPAN13).